The chain runs to 902 residues: 4-hydroxyphenylacetate decarboxylase glycyl radical subunit (902 aa).

The PFL domain occupies 38–774; the sequence is KRAEDLLDVY…ATLATPDGRL (737 aa). 2 residues coordinate 4-hydroxyphenylacetate: Ser-348 and Cys-507. Cys-507 serves as the catalytic Cysteine radical intermediate. Glu-509 acts as the Proton donor in catalysis. Residues His-540 and Glu-641 each coordinate 4-hydroxyphenylacetate. Residues 782-902 form the Glycine radical domain; sequence GSVSAYAGTD…VIARTEYEGV (121 aa). Gly-877 bears the Glycine radical mark.

This sequence belongs to the glycyl radical enzyme (GRE) family. HPAD subfamily. In terms of assembly, heterooctamer consisting of 4 large (HpdB) subunits and 4 small (HpdC) subunits, arranged as a tetramer of heterodimers. Also forms a catalytically inactive homodimer. Post-translationally, requires the activating protein CsdA to generate the key active site glycyl radical that is involved in catalysis. Phosphorylated on serine. Phosphorylation may trigger the formation of the active heterooctamers and thereby regulates enzyme activity.

It catalyses the reaction 4-hydroxyphenylacetate + H(+) = 4-methylphenol + CO2. The catalysed reaction is 3,4-dihydroxyphenylacetate + H(+) = 4-methylcatechol + CO2. Glycyl radical subunit of the HPA decarboxylase that decarboxylates phenylacetates with a hydroxyl group in the p-position. Active toward 4-hydroxyphenylacetate and 3,4-dihydroxyphenylacetate, forming 4-methylphenol and 4-methylcatechol, respectively. Is likely involved in the catabolism of aromatic amino acids such as tyrosine fermentation. 4-methylphenol (p-cresol) formation provides metabolic toxicity, which allows an active suppression of other microbes and may provide growth advantages for the producers in highly competitive environments. The large subunit is the catalytic subunit that binds the substrate. The polypeptide is 4-hydroxyphenylacetate decarboxylase glycyl radical subunit (Clostridioides difficile (strain CD196) (Peptoclostridium difficile)).